Consider the following 111-residue polypeptide: uncharacterized protein (111 aa).

The protein belongs to the asfivirus E111R family.

This is an uncharacterized protein from African swine fever virus (strain Badajoz 1971 Vero-adapted) (Ba71V).